The sequence spans 682 residues: Zinc finger protein 16 (682 aa).

Over residues 1–10 (MPSLRTRREE) the composition is skewed to basic and acidic residues. Residues 1 to 38 (MPSLRTRREEAEMELSAPGPSPWTPAAQARVSDAPAVT) form a disordered region. A necessary for transcription activation region spans residues 62–210 (YQQPDCDTRT…GVPTAESPLI (149 aa)). The C2H2-type 1; degenerate zinc finger occupies 209 to 231 (LICNECGKTFRGNPDLIQRQIVH). The segment at 237–259 (FMCDDCGKTFSQNSVLKNRHRSH) adopts a C2H2-type 2; degenerate zinc-finger fold. Lysine 253 participates in a covalent cross-link: Glycyl lysine isopeptide (Lys-Gly) (interchain with G-Cter in SUMO2). 8 consecutive C2H2-type zinc fingers follow at residues 265–287 (YQCSECGKAFRGHSDFSRHQSHH), 293–315 (YTCTECGKAFSQNSSLKKHQKSH), 321–343 (YECNECGKAFRRSSNLIQHQRIH), 349–371 (YVCSECGKAFRRSSNLIKHHRTH), 377–399 (FECGECGKAFSQSAHLRKHQRVH), 405–427 (YECNDCGKPFSRVSNLIKHHRVH), 433–455 (YKCSDCGKXFSQSSSLIQHRRIH), and 461–483 (HVCNVCGKAFSYSSVLRKHQIIH). Required for nuclear localization stretches follow at residues 268–393 (SECG…AHLR) and 341–373 (RIHSGEKPYVCSECGKAFRRSSNLIKHHRTHTG). A required for nuclear localization region spans residues 473 to 503 (SSVLRKHQIIHTGEKPYRCSVCGKAFSHSSA). Lysine 487 carries the post-translational modification N6-acetyllysine. 7 consecutive C2H2-type zinc fingers follow at residues 489–511 (YRCSVCGKAFSHSSALIQHQGVH), 517–539 (YACHECGKTFGRSSNLILHQRVH), 545–567 (YECTECGKTFSQSSTLIQHQRIH), 573–595 (HECNQCGKAFNRSSNLIHHQKVH), 601–623 (YTCVECGKGFSQSSHLIQHQIIH), 629–651 (YKCSECGKAFSQRSVLIQHQRIH), and 657–679 (YDCAACGKAFSQRSKLIKHQLIH).

The protein belongs to the krueppel C2H2-type zinc-finger protein family. In terms of assembly, interacts with INCA1; the interaction inhibits INCA1 activity and induces the cell cycle process.

It is found in the nucleus. Acts as a transcriptional activator. Promotes cell proliferation by facilitating the cell cycle phase transition from the S to G2/M phase. Involved in both the hemin- and phorbol myristate acetate (PMA)-induced erythroid and megakaryocytic differentiation, respectively. Also plays a role as an inhibitor of cell apoptosis. This is Zinc finger protein 16 (ZNF16) from Pan troglodytes (Chimpanzee).